The primary structure comprises 262 residues: Virulence regulon transcriptional activator VirF (262 aa).

Residues 161-258 (DQIRKIVEKN…GITPKKFYLY (98 aa)) enclose the HTH araC/xylS-type domain. DNA-binding regions (H-T-H motif) lie at residues 178 to 199 (SDISNNLNLSEIAVRKRLESEK) and 225 to 248 (INDVSRLIGISSPSYFIRKFNEYY).

Homodimer.

Its function is as follows. Primary regulator of plasmid-encoded virulence genes. Activates the transcription of icsA (virG) and of virB, which is an activator of the ipaABCD virulence regulon. The sequence is that of Virulence regulon transcriptional activator VirF (virF) from Shigella dysenteriae.